The primary structure comprises 372 residues: uncharacterized protein (372 aa).

Residues 38 to 270 (FFIEGGGTKG…ANNIPLDYLI (233 aa)) form the PNPLA domain. The GXGXXG motif lies at 42 to 47 (GGGTKG). The GXSXG motif lies at 74–78 (GTSVG). Serine 76 (nucleophile) is an active-site residue. Catalysis depends on aspartate 257, which acts as the Proton acceptor. The short motif at 257-259 (DGG) is the DGA/G element.

Functionally, probable lipid hydrolase. This is an uncharacterized protein from Acanthamoeba polyphaga (Amoeba).